The chain runs to 122 residues: MIQAQTILQVADNTGAKEIMCIRVLRGSSKKGARVGDIIVAVVKKTKKQTSVKKSEIVRAVIVRTRTTIHRANGMHLKFNENAAVLVTKELHPKGTRLFGPIPYECSEAGLNSIISLAPYII.

This sequence belongs to the universal ribosomal protein uL14 family. As to quaternary structure, part of the 50S ribosomal subunit.

The protein localises to the plastid. In terms of biological role, binds to 23S rRNA. The chain is Large ribosomal subunit protein uL14c (rpl14) from Helicosporidium sp. subsp. Simulium jonesii (Green alga).